A 332-amino-acid polypeptide reads, in one-letter code: UDP-3-O-acylglucosamine N-acyltransferase (332 aa).

His-231 acts as the Proton acceptor in catalysis.

It belongs to the transferase hexapeptide repeat family. LpxD subfamily. In terms of assembly, homotrimer.

It carries out the reaction a UDP-3-O-[(3R)-3-hydroxyacyl]-alpha-D-glucosamine + a (3R)-hydroxyacyl-[ACP] = a UDP-2-N,3-O-bis[(3R)-3-hydroxyacyl]-alpha-D-glucosamine + holo-[ACP] + H(+). It participates in bacterial outer membrane biogenesis; LPS lipid A biosynthesis. Its function is as follows. Catalyzes the N-acylation of UDP-3-O-acylglucosamine using 3-hydroxyacyl-ACP as the acyl donor. Is involved in the biosynthesis of lipid A, a phosphorylated glycolipid that anchors the lipopolysaccharide to the outer membrane of the cell. This chain is UDP-3-O-acylglucosamine N-acyltransferase, found in Vesicomyosocius okutanii subsp. Calyptogena okutanii (strain HA).